A 203-amino-acid chain; its full sequence is Dual-action ribosomal maturation protein DarP (203 aa).

Disordered stretches follow at residues 1-31 (MRPMTRKTRIQPIEHAVEDDDNGYDRPSKSQ) and 183-203 (GASDSDDEAAGDAGDDHDDEA). Residues 186–203 (DSDDEAAGDAGDDHDDEA) show a composition bias toward acidic residues.

This sequence belongs to the DarP family.

It localises to the cytoplasm. Member of a network of 50S ribosomal subunit biogenesis factors which assembles along the 30S-50S interface, preventing incorrect 23S rRNA structures from forming. Promotes peptidyl transferase center (PTC) maturation. This chain is Dual-action ribosomal maturation protein DarP, found in Burkholderia cenocepacia (strain ATCC BAA-245 / DSM 16553 / LMG 16656 / NCTC 13227 / J2315 / CF5610) (Burkholderia cepacia (strain J2315)).